The sequence spans 510 residues: Mitogen-activated protein kinase 9 (510 aa).

The Protein kinase domain occupies 23-314; sequence YQIQEVIGKG…AEEALADPYF (292 aa). ATP-binding positions include 29–37 and Lys-52; that span reads IGKGSYGVV. Asp-149 (proton acceptor) is an active-site residue. The residue at position 185 (Thr-185) is a Phosphothreonine. Positions 185–187 match the TXY motif; it reads TDY. The residue at position 187 (Tyr-187) is a Phosphotyrosine. Phosphothreonine is present on Thr-190. A disordered region spans residues 393 to 461; that stretch reads NYGKGEKGSP…SDYRNGTSQT (69 aa). The span at 410–431 shows a compositional bias: basic and acidic residues; it reads LPRERVPAPKKENGSHNHDIEN. The span at 433–461 shows a compositional bias: polar residues; sequence SIASLVTTLESPPTSQHEGSDYRNGTSQT.

It belongs to the protein kinase superfamily. CMGC Ser/Thr protein kinase family. MAP kinase subfamily. Dually phosphorylated on Thr-185 and Tyr-187, which activates the enzyme.

It catalyses the reaction L-seryl-[protein] + ATP = O-phospho-L-seryl-[protein] + ADP + H(+). It carries out the reaction L-threonyl-[protein] + ATP = O-phospho-L-threonyl-[protein] + ADP + H(+). Its activity is regulated as follows. Activated by threonine and tyrosine phosphorylation. This chain is Mitogen-activated protein kinase 9 (MPK9), found in Arabidopsis thaliana (Mouse-ear cress).